Reading from the N-terminus, the 559-residue chain is Glycerol kinase (559 aa).

T20 serves as a coordination point for ADP. The ATP site is built by T20, S21, and S22. T20 contacts sn-glycerol 3-phosphate. R24 is an ADP binding site. Sn-glycerol 3-phosphate is bound by residues R94, E95, and Y148. Positions 94, 95, and 148 each coordinate glycerol. A beta-D-fructose 1,6-bisphosphate-binding site is contributed by G252. Position 265 (D265) interacts with sn-glycerol 3-phosphate. Positions 265 and 266 each coordinate glycerol. ADP is bound by residues T287, G332, G433, and N437. Positions 287, 332, and 433 each coordinate ATP. A helical transmembrane segment spans residues 532-552 (IFCSLPLGFFIVSSMVMLIGA).

Belongs to the FGGY kinase family. Widely expressed in fetal and adult tissues. In terms of tissue distribution, the sole isoform expressed in adult liver and kidney.

It localises to the mitochondrion outer membrane. It is found in the nucleus. The protein resides in the cytoplasm. Its subcellular location is the cytosol. It carries out the reaction glycerol + ATP = sn-glycerol 3-phosphate + ADP + H(+). It functions in the pathway polyol metabolism; glycerol degradation via glycerol kinase pathway; sn-glycerol 3-phosphate from glycerol: step 1/1. Its activity is regulated as follows. Potassium and magnesium-dependent. Its function is as follows. Kinase that plays a key role in glycerol metabolism, catalyzing its phosphorylation to produce sn-glycerol 3-phosphate. Sn-glycerol 3-phosphate is a crucial intermediate in various metabolic pathways, such as the synthesis of glycerolipids and triglycerides, glycogenesis, glycolysis and gluconeogenesis. The chain is Glycerol kinase from Homo sapiens (Human).